The primary structure comprises 284 residues: Gap junction beta-1 protein (284 aa).

Residues 1–22 (MNWTGLYTLLSGVNRHSTAIGR) are Cytoplasmic-facing. Residues 23 to 45 (VWLSVIFIFRIMVLVVAAESVWG) traverse the membrane as a helical segment. Residues 46–75 (DEKSSFICNTLQPGCNSVCYDHFFPISHVR) are Extracellular-facing. A helical transmembrane segment spans residues 76 to 95 (LWSLQLILVSTPALLVAMHV). The Cytoplasmic segment spans residues 96 to 130 (AHQQHIEKKMLRLEGHGDPLHLEEVKRHKVHISGT). The helical transmembrane segment at 131–153 (LWWTYVISVVFRLLFEAAFMYVF) threads the bilayer. Over 154–191 (YLLYPGYAMVRLVKCDAYPCPNTVDCFVSRPTEKTIFT) the chain is Extracellular. The chain crosses the membrane as a helical span at residues 192-214 (VFMLAASGICIILNVAEVVYLIF). Topologically, residues 215–284 (RACARRAQRR…AEKSDRCSAC (70 aa)) are cytoplasmic. 4 positions are modified to phosphoserine: serine 233, serine 259, serine 267, and serine 278.

This sequence belongs to the connexin family. Beta-type (group I) subfamily. In terms of assembly, a connexon is composed of a hexamer of connexins. Interacts with CNST.

It localises to the cell membrane. The protein resides in the cell junction. The protein localises to the gap junction. One gap junction consists of a cluster of closely packed pairs of transmembrane channels, the connexons, through which materials of low MW diffuse from one cell to a neighboring cell. The chain is Gap junction beta-1 protein (GJB1) from Bos taurus (Bovine).